The primary structure comprises 251 residues: MNLNSIPAFDDNYIWVLNDEAGRCLIVDPGDAEPVLNAISANNWQPEAIFLTHHHHDHVGGVKELVEKFPQIVVYGPQETQDKGTTQVVKDGETAFVLGHEFSVIATPGHTLGHICYFSKPYLFCGDTLFSGGCGRLFEGTPSQMYQSIKKLSALPDDTLVCCAHEYTLSNMKFALSILPHDLSINDYYRKVKELRAKNQITLPVILKNERQINVFLRTEDIDLINVINEETLLKQPEERFAWLRSKKDRF.

7 residues coordinate Zn(2+): histidine 53, histidine 55, aspartate 57, histidine 58, histidine 110, aspartate 127, and histidine 165.

It belongs to the metallo-beta-lactamase superfamily. Glyoxalase II family. Monomer. Zn(2+) serves as cofactor.

It carries out the reaction an S-(2-hydroxyacyl)glutathione + H2O = a 2-hydroxy carboxylate + glutathione + H(+). The protein operates within secondary metabolite metabolism; methylglyoxal degradation; (R)-lactate from methylglyoxal: step 2/2. Functionally, thiolesterase that catalyzes the hydrolysis of S-D-lactoyl-glutathione to form glutathione and D-lactic acid. The sequence is that of Hydroxyacylglutathione hydrolase from Escherichia coli (strain UTI89 / UPEC).